Here is a 295-residue protein sequence, read N- to C-terminus: Pyridoxal 5'-phosphate synthase subunit PdxS (295 aa).

Aspartate 25 serves as a coordination point for D-ribose 5-phosphate. The active-site Schiff-base intermediate with D-ribose 5-phosphate is the lysine 82. Glycine 154 is a D-ribose 5-phosphate binding site. Arginine 166 is a binding site for D-glyceraldehyde 3-phosphate. Residues glycine 215 and 236-237 (GS) each bind D-ribose 5-phosphate.

The protein belongs to the PdxS/SNZ family. In terms of assembly, in the presence of PdxT, forms a dodecamer of heterodimers.

The catalysed reaction is aldehydo-D-ribose 5-phosphate + D-glyceraldehyde 3-phosphate + L-glutamine = pyridoxal 5'-phosphate + L-glutamate + phosphate + 3 H2O + H(+). It participates in cofactor biosynthesis; pyridoxal 5'-phosphate biosynthesis. Catalyzes the formation of pyridoxal 5'-phosphate from ribose 5-phosphate (RBP), glyceraldehyde 3-phosphate (G3P) and ammonia. The ammonia is provided by the PdxT subunit. Can also use ribulose 5-phosphate and dihydroxyacetone phosphate as substrates, resulting from enzyme-catalyzed isomerization of RBP and G3P, respectively. The sequence is that of Pyridoxal 5'-phosphate synthase subunit PdxS from Shouchella clausii (strain KSM-K16) (Alkalihalobacillus clausii).